The primary structure comprises 209 residues: MAKLYFYYSAMNAGKTTTLLQSAHNYRERGMRTLILTPKLDHRAGSGVVASRIGLRADGRIFERDTELQQLVERDIHNDGALHCVLVDEAQFLSRAQVWQLSEVVDRLRIPVLCYGLRTDFRGELFEGSQFLLAWADELEEIKTICHSGSKATMTVRVDAHGHAVQDGPQVEIGGNERYVSVSRAEFKKIMRGEGRIDPLQIALPLPVA.

Residues 9–16 (SAMNAGKT) and 88–91 (DEAQ) each bind ATP. Glutamate 89 serves as the catalytic Proton acceptor.

It belongs to the thymidine kinase family. Homotetramer.

The protein resides in the cytoplasm. It catalyses the reaction thymidine + ATP = dTMP + ADP + H(+). This Xanthomonas axonopodis pv. citri (strain 306) protein is Thymidine kinase.